Here is a 170-residue protein sequence, read N- to C-terminus: Ribosome maturation factor RimM (170 aa).

The PRC barrel domain occupies 92–163; sequence KEGWYYFELE…RMDVELPPGL (72 aa).

Belongs to the RimM family. In terms of assembly, binds ribosomal protein uS19.

It localises to the cytoplasm. An accessory protein needed during the final step in the assembly of 30S ribosomal subunit, possibly for assembly of the head region. Essential for efficient processing of 16S rRNA. May be needed both before and after RbfA during the maturation of 16S rRNA. It has affinity for free ribosomal 30S subunits but not for 70S ribosomes. The polypeptide is Ribosome maturation factor RimM (Desulfitobacterium hafniense (strain Y51)).